The primary structure comprises 158 residues: NAD(P)H-quinone oxidoreductase subunit J, chloroplastic (158 aa).

Belongs to the complex I 30 kDa subunit family. In terms of assembly, NDH is composed of at least 16 different subunits, 5 of which are encoded in the nucleus.

The protein localises to the plastid. Its subcellular location is the chloroplast thylakoid membrane. The catalysed reaction is a plastoquinone + NADH + (n+1) H(+)(in) = a plastoquinol + NAD(+) + n H(+)(out). The enzyme catalyses a plastoquinone + NADPH + (n+1) H(+)(in) = a plastoquinol + NADP(+) + n H(+)(out). Its function is as follows. NDH shuttles electrons from NAD(P)H:plastoquinone, via FMN and iron-sulfur (Fe-S) centers, to quinones in the photosynthetic chain and possibly in a chloroplast respiratory chain. The immediate electron acceptor for the enzyme in this species is believed to be plastoquinone. Couples the redox reaction to proton translocation, and thus conserves the redox energy in a proton gradient. The polypeptide is NAD(P)H-quinone oxidoreductase subunit J, chloroplastic (Dioscorea elephantipes (Elephant's foot yam)).